Reading from the N-terminus, the 85-residue chain is Large ribosomal subunit protein uL29 (85 aa).

The protein belongs to the universal ribosomal protein uL29 family.

This chain is Large ribosomal subunit protein uL29, found in Thermobifida fusca (strain YX).